Consider the following 476-residue polypeptide: NADP-dependent glyceraldehyde-3-phosphate dehydrogenase (476 aa).

R103 contributes to the substrate binding site. Residue S151 participates in NADP(+) binding. 154-155 contacts substrate; it reads NY. Residues K177, T180, D215, and 230 to 251 each bind NADP(+); that span reads GSTP…MLEL. Catalysis depends on residues E250 and C284. 283 to 285 lines the substrate pocket; it reads RCT. E377 provides a ligand contact to NADP(+). Position 437 (R437) interacts with substrate.

The protein belongs to the aldehyde dehydrogenase family. In terms of assembly, homotetramer.

It carries out the reaction D-glyceraldehyde 3-phosphate + NADP(+) + H2O = (2R)-3-phosphoglycerate + NADPH + 2 H(+). Functionally, catalyzes the irreversible NADP-dependent oxidation of glyceraldehyde-3-phosphate to 3-phosphoglycerate. Is not able to use NAD instead of NADP. May play an important role in NADPH production in S.equinus. The polypeptide is NADP-dependent glyceraldehyde-3-phosphate dehydrogenase (gapN) (Streptococcus equinus (Streptococcus bovis)).